We begin with the raw amino-acid sequence, 509 residues long: Glutamate--tRNA ligase (509 aa).

Residues 20 to 30 (PSPTGFPHVGT) carry the 'HIGH' region motif. Zn(2+) contacts are provided by cysteine 117, cysteine 119, cysteine 144, and histidine 146. Positions 261–265 (KLSKR) match the 'KMSKS' region motif. Lysine 264 is an ATP binding site.

It belongs to the class-I aminoacyl-tRNA synthetase family. Glutamate--tRNA ligase type 1 subfamily. In terms of assembly, monomer. It depends on Zn(2+) as a cofactor.

It localises to the cytoplasm. It catalyses the reaction tRNA(Glu) + L-glutamate + ATP = L-glutamyl-tRNA(Glu) + AMP + diphosphate. Functionally, catalyzes the attachment of glutamate to tRNA(Glu) in a two-step reaction: glutamate is first activated by ATP to form Glu-AMP and then transferred to the acceptor end of tRNA(Glu). This Psychrobacter cryohalolentis (strain ATCC BAA-1226 / DSM 17306 / VKM B-2378 / K5) protein is Glutamate--tRNA ligase.